Here is a 510-residue protein sequence, read N- to C-terminus: Maturase K (510 aa).

Belongs to the intron maturase 2 family. MatK subfamily.

It is found in the plastid. The protein localises to the chloroplast. In terms of biological role, usually encoded in the trnK tRNA gene intron. Probably assists in splicing its own and other chloroplast group II introns. The protein is Maturase K of Grahamia bracteata.